The primary structure comprises 361 residues: GDSL esterase/lipase At2g40250 (361 aa).

The signal sequence occupies residues 1–28; sequence MNRNQHKPMFVTFLINILLLQLLNLTNA. Catalysis depends on Ser-43, which acts as the Nucleophile. Catalysis depends on residues Asp-337 and His-340.

Belongs to the 'GDSL' lipolytic enzyme family.

It is found in the secreted. This chain is GDSL esterase/lipase At2g40250, found in Arabidopsis thaliana (Mouse-ear cress).